The following is an 800-amino-acid chain: Isoamylase 2, chloroplastic (800 aa).

Residues 1 to 10 are compositionally biased toward pro residues; it reads MASLPAPPTP. A disordered region spans residues 1-22; it reads MASLPAPPTPLGSCPRGRGGGR. The N-terminal 34 residues, 1 to 34, are a transit peptide targeting the chloroplast; sequence MASLPAPPTPLGSCPRGRGGGRVVARPRRAGLAC.

It belongs to the glycosyl hydrolase 13 family. Forms a hetero-hexamer composed of five ISA1 and one ISA2. Highly expressed in developing endosperm and leaves.

Its subcellular location is the plastid. The protein resides in the chloroplast. It carries out the reaction Hydrolysis of (1-&gt;6)-alpha-D-glucosidic branch linkages in glycogen, amylopectin and their beta-limit dextrins.. Its function is as follows. Starch-debranching enzyme involved in amylopectin biosynthesis in endosperm. Functions by removing excess branches or improper branches that interfere with the formation of double helices of the cluster chains of amylopectin and crystallization of starch. Works together with ISA1 as heterooligomer. The heterooligomer ISA1 and ISA2 possesses higher affinity than the ISA1 homooligomer for various branched polyglucans in vitro, but no marked differences exist in chain preferences for debranching of amylopectin and phytoglycogen between these forms. This Oryza sativa subsp. japonica (Rice) protein is Isoamylase 2, chloroplastic.